Consider the following 439-residue polypeptide: Paraneoplastic antigen-like protein 8A (439 aa).

Positions 208-439 are disordered; it reads SALKAETPNN…RRATNESRKV (232 aa). The span at 231–249 shows a compositional bias: basic residues; that stretch reads LVRRAGAKSRSRRKKQKKN. 3 stretches are compositionally biased toward basic and acidic residues: residues 314–326, 395–404, and 423–439; these read GPRE…RAEA, SRREASDQKA, and AKPE…SRKV.

This sequence belongs to the PNMA family.

In Homo sapiens (Human), this protein is Paraneoplastic antigen-like protein 8A.